The following is a 616-amino-acid chain: MAU2 chromatid cohesion factor homolog (616 aa).

TPR repeat units follow at residues 90–123, 445–478, and 485–518; these read FDTA…SQHN, GSFY…ANAE, and SCSL…ASKI.

The protein belongs to the SCC4/mau-2 family. As to quaternary structure, component of the cohesin loading complex.

The protein localises to the nucleus. It localises to the nucleoplasm. Functionally, required for association of the cohesin complex with chromatin during interphase. Plays a role in sister chromatid cohesion and normal progression through prometaphase. This chain is MAU2 chromatid cohesion factor homolog, found in Culex quinquefasciatus (Southern house mosquito).